The sequence spans 146 residues: Prefoldin subunit alpha (146 aa).

This sequence belongs to the prefoldin alpha subunit family. In terms of assembly, heterohexamer of two alpha and four beta subunits.

It is found in the cytoplasm. Functionally, molecular chaperone capable of stabilizing a range of proteins. Seems to fulfill an ATP-independent, HSP70-like function in archaeal de novo protein folding. In Methanococcus vannielii (strain ATCC 35089 / DSM 1224 / JCM 13029 / OCM 148 / SB), this protein is Prefoldin subunit alpha.